The sequence spans 987 residues: Nuclear matrix constituent protein 1b (987 aa).

Residues 1–25 (MASPRSAGGVGGGGGGGGGSGGAAA) are disordered. The segment covering 8–24 (GGVGGGGGGGGGSGGAA) has biased composition (gly residues). Coiled coils occupy residues 403 to 545 (LAEL…ERRA) and 594 to 717 (LSKI…DREA). 2 stretches are compositionally biased toward basic and acidic residues: residues 752–764 (SDIN…HDNS) and 898–908 (CKEHEYGDKGP). Disordered regions lie at residues 752–775 (SDIN…FGRK) and 887–987 (HDEA…FLIT). The span at 944 to 954 (ATVSATETSNV) shows a compositional bias: polar residues. A compositionally biased stretch (acidic residues) spans 956–973 (GPEDNNDSDEEDEEEEEE).

This sequence belongs to the CRWN family. In terms of assembly, interacts with SWI3C.

It localises to the nucleus matrix. Its subcellular location is the nucleus lamina. Architectural component of nuclear structure that plays different roles in controlling nuclear size and morphology. Involved in the modification of chromatin accessibility by interacting with SWI3C, a component of the chromatin-remodeling complex, to thus reduce the suppression effect of the complex. Acts as positive regulator of drought resistance and modulates root growth. Positively regulates the expression of genes related to root growth and drought resistance. This Oryza sativa subsp. japonica (Rice) protein is Nuclear matrix constituent protein 1b.